The sequence spans 240 residues: Probable Ni/Fe-hydrogenase B-type cytochrome subunit (240 aa).

A run of 4 helical transmembrane segments spans residues 31 to 51 (LWHW…YFIG), 75 to 95 (FAAG…AFVG), 142 to 163 (LAMF…FALY), and 196 to 213 (LGMW…YLAA).

Belongs to the HupC/HyaC/HydC family.

It localises to the cell membrane. In terms of biological role, probable b-type cytochrome. The polypeptide is Probable Ni/Fe-hydrogenase B-type cytochrome subunit (hupZ) (Azotobacter chroococcum mcd 1).